Here is a 284-residue protein sequence, read N- to C-terminus: Cell wall mannoprotein 1 (284 aa).

The signal sequence occupies residues 1–17 (MRFSALLVTLGLTGALA). Residues 176 to 234 (SSTGTASSSAPATETATATETSTATGTVTETATSTPVIPTGTASGSASATPSTTATPTT) show a composition bias toward low complexity. The disordered stretch occupies residues 176-252 (SSTGTASSSA…SSTGTATAST (77 aa)).

This sequence belongs to the cell wall mannoprotein 1 family. Post-translationally, galactomannoprotein, glycosylated.

It localises to the secreted. Its subcellular location is the cell wall. Functionally, constitutive protein of the cell wall. Antigen target of host humoral immune response. The polypeptide is Cell wall mannoprotein 1 (Aspergillus fumigatus (Neosartorya fumigata)).